Here is a 670-residue protein sequence, read N- to C-terminus: MSRFDYRNTSKNTSVVDPDHSSPIINYRKDAKKGIKFTFMVVGESGTGKTTFINSLLNKKVLNHRYEKLSPTVGDTKTLMFTSAKSVALPNTSILTKNEFNPRTINEEPGIALTETHIEIIDDDNQKLLLNIIDTPGFGENLNNELCFIEIENYLKQQFDLVLAEETRIKRNPRFVDTRVHVMLYFITPTGHGLREIDIQCMKRLSKYVNIIPVIGKADSFTLNELQHFKQQIRIDIQKFNVPTFQFDNSLNDYDEDEDYDLIQECKFLTNLQPFAVVTSEDVFEVRESTTSTKGNNDKPKIIRARKYPWGLVDINDTRYSDFPILKSVLLGSHLQDLKDLTHDFLYETYRTERLTKVTGNGQAFDDEENEDAEFHDTVEHQLNDSNRGVGGDDNNNNNNNNNNASTIPSMSNLAQLTTSTNEHDASHIDNNSITSTSSSIKKSTSMLIDDHPSSSPKLKNISSFTSSTSTVSLEGGEKEGGHHDRGANSTSTNNNNNNNAFKRLSIGPQRNQLRQISETVPYVLRHERILERQQKLEEMEQASARELANRAALLEKKAAQLKAKEKALRQLELNRQKQEESATSSLHRKDSDISGSVQSGGVDDGKSESTNNNNNNRNGYGYGHGHGHGQSHEYDNSEYHHDDSTPNYETSRLQKDETLTDLHSIVSNH.

The Septin-type G domain occupies 33–357; it reads KGIKFTFMVV…ETYRTERLTK (325 aa). The tract at residues 43–50 is G1 motif; sequence GESGTGKT. GTP contacts are provided by residues 43 to 50, Gly-137, 217 to 225, and Arg-306; these read GESGTGKT and KADSFTLNE. The interval 134-137 is G3 motif; sequence DTPG. The G4 motif stretch occupies residues 216 to 219; the sequence is GKAD. 2 disordered regions span residues 383 to 513 and 574 to 670; these read LNDS…QRNQ and LNRQ…VSNH. Positions 395–404 are enriched in low complexity; it reads NNNNNNNNNN. Polar residues predominate over residues 405–421; it reads ASTIPSMSNLAQLTTST. Composition is skewed to low complexity over residues 433-446 and 463-473; these read SITS…KSTS and SSFTSSTSTVS. The stretch at 472–606 forms a coiled coil; the sequence is VSLEGGEKEG…SVQSGGVDDG (135 aa). Residues 476–487 are compositionally biased toward basic and acidic residues; it reads GGEKEGGHHDRG. A compositionally biased stretch (low complexity) spans 489–500; that stretch reads NSTSTNNNNNNN. The span at 631 to 645 shows a compositional bias: basic and acidic residues; sequence QSHEYDNSEYHHDDS.

Belongs to the TRAFAC class TrmE-Era-EngA-EngB-Septin-like GTPase superfamily. Septin GTPase family. Component of the septin complex which consists of CDC3, CDC10, CDC11, CDC12 and probably SEP7. The purified septin complex appeared to have a stoichiometry of 2 CDC3, 1 to 2 CDC10, 1 CDC11, 2 CDC12, and 1 or none SEP7 subunit. Induction of hyphal growth brings about important modifications in septin ring dynamics, because the rings were found in a different state from those of yeast cells. This hyphal-specific state contains a core of stable septins (SEP7, CDC3, and CDC12), and it shows a high CDC10 turnover between the ring and the cytoplasm. Interacts with GIN4. Post-translationally, phosphorylated by GIN4 which stabilizes the GIN4-SEP7 interaction.

The protein localises to the bud neck. Septins are GTPases involved in cytokinesis that assemble early in the cell cycle as a patch at the incipient bud site and form a ring before bud emergence, which transforms into an hour-glass shaped collar of cortical filaments that spans both sides of the mother-bud neck. This collar persists until just before cytokinesis, when it splits into two rings that occupy opposite sides of the neck. The septins at the bud neck serve as a structural scaffold that recruits different components involved in diverse processes at specific stages during the cell cycle. Many proteins bind asymmetrically to the septin collar. The septin assembly is regulated by protein kinase GIN4. Septins are also involved in cell morphogenesis, chlamydospores morphogenesis, bud site selection, chitin deposition, cell cycle regulation, cell compartmentalization and spore wall formation. SEP7 is required to convert hyphal septin rings into the hyphal-specific state and is necessary for CDC10 turnover during hyphal growth. This chain is Septation protein 7 (SEP7), found in Candida albicans (strain SC5314 / ATCC MYA-2876) (Yeast).